The primary structure comprises 261 residues: Cytochrome c oxidase subunit 3 (261 aa).

At 1–15 (MTHQTHAYHMVNPSP) the chain is on the mitochondrial matrix side. A helical membrane pass occupies residues 16 to 34 (WPLTGAMSALLLTSGLIMW). Over 35–40 (FHFNSY) the chain is Mitochondrial intermembrane. The helical transmembrane segment at 41–66 (TLLLLGLLTNLISSYQWWRDIVREGT) threads the bilayer. The Mitochondrial matrix portion of the chain corresponds to 67-72 (YQGHHT). A helical transmembrane segment spans residues 73–105 (KIVQKGLRYGMILFIISEVFFFLGFFWAFYHSS). At 106–128 (LAPTPELGGCWPPTGISPLNPLE) the chain is on the mitochondrial intermembrane side. A helical transmembrane segment spans residues 129–152 (VPLLNTSILLASGVSITWAHHSLM). The Mitochondrial matrix segment spans residues 153–155 (EGN). A helical transmembrane segment spans residues 156-183 (RKQMLQALTITIALGLYFTALQAMEYYE). Residues 184-190 (ASFTISD) are Mitochondrial intermembrane-facing. The helical transmembrane segment at 191–223 (GVYGSTFFVATGFHGLHVIIGTTFLITCLVRQT) threads the bilayer. Topologically, residues 224–232 (LYHFTSNHH) are mitochondrial matrix. The chain crosses the membrane as a helical span at residues 233–256 (FGFEAAAWYWHFVDVVWLFLYVSI). Residues 257–261 (YWWGS) are Mitochondrial intermembrane-facing.

It belongs to the cytochrome c oxidase subunit 3 family. In terms of assembly, component of the cytochrome c oxidase (complex IV, CIV), a multisubunit enzyme composed of 14 subunits. The complex is composed of a catalytic core of 3 subunits MT-CO1, MT-CO2 and MT-CO3, encoded in the mitochondrial DNA, and 11 supernumerary subunits COX4I, COX5A, COX5B, COX6A, COX6B, COX6C, COX7A, COX7B, COX7C, COX8 and NDUFA4, which are encoded in the nuclear genome. The complex exists as a monomer or a dimer and forms supercomplexes (SCs) in the inner mitochondrial membrane with NADH-ubiquinone oxidoreductase (complex I, CI) and ubiquinol-cytochrome c oxidoreductase (cytochrome b-c1 complex, complex III, CIII), resulting in different assemblies (supercomplex SCI(1)III(2)IV(1) and megacomplex MCI(2)III(2)IV(2)).

It localises to the mitochondrion inner membrane. The enzyme catalyses 4 Fe(II)-[cytochrome c] + O2 + 8 H(+)(in) = 4 Fe(III)-[cytochrome c] + 2 H2O + 4 H(+)(out). Functionally, component of the cytochrome c oxidase, the last enzyme in the mitochondrial electron transport chain which drives oxidative phosphorylation. The respiratory chain contains 3 multisubunit complexes succinate dehydrogenase (complex II, CII), ubiquinol-cytochrome c oxidoreductase (cytochrome b-c1 complex, complex III, CIII) and cytochrome c oxidase (complex IV, CIV), that cooperate to transfer electrons derived from NADH and succinate to molecular oxygen, creating an electrochemical gradient over the inner membrane that drives transmembrane transport and the ATP synthase. Cytochrome c oxidase is the component of the respiratory chain that catalyzes the reduction of oxygen to water. Electrons originating from reduced cytochrome c in the intermembrane space (IMS) are transferred via the dinuclear copper A center (CU(A)) of subunit 2 and heme A of subunit 1 to the active site in subunit 1, a binuclear center (BNC) formed by heme A3 and copper B (CU(B)). The BNC reduces molecular oxygen to 2 water molecules using 4 electrons from cytochrome c in the IMS and 4 protons from the mitochondrial matrix. This is Cytochrome c oxidase subunit 3 (MT-CO3) from Ornithorhynchus anatinus (Duckbill platypus).